Reading from the N-terminus, the 710-residue chain is Phosphoribosylformylglycinamidine synthase subunit PurL (710 aa).

H36 is an active-site residue. ATP-binding residues include Y39 and K80. E82 is a binding site for Mg(2+). Residues 83 to 86 (SHNH) and R105 contribute to the substrate site. H84 acts as the Proton acceptor in catalysis. Residue D106 coordinates Mg(2+). Q226 serves as a coordination point for substrate. Residue D252 participates in Mg(2+) binding. 294–296 (ETQ) is a substrate binding site. Residues D470 and G507 each contribute to the ATP site. Substrate is bound at residue S510.

This sequence belongs to the FGAMS family. Monomer. Part of the FGAM synthase complex composed of 1 PurL, 1 PurQ and 2 PurS subunits.

The protein localises to the cytoplasm. It carries out the reaction N(2)-formyl-N(1)-(5-phospho-beta-D-ribosyl)glycinamide + L-glutamine + ATP + H2O = 2-formamido-N(1)-(5-O-phospho-beta-D-ribosyl)acetamidine + L-glutamate + ADP + phosphate + H(+). It participates in purine metabolism; IMP biosynthesis via de novo pathway; 5-amino-1-(5-phospho-D-ribosyl)imidazole from N(2)-formyl-N(1)-(5-phospho-D-ribosyl)glycinamide: step 1/2. In terms of biological role, part of the phosphoribosylformylglycinamidine synthase complex involved in the purines biosynthetic pathway. Catalyzes the ATP-dependent conversion of formylglycinamide ribonucleotide (FGAR) and glutamine to yield formylglycinamidine ribonucleotide (FGAM) and glutamate. The FGAM synthase complex is composed of three subunits. PurQ produces an ammonia molecule by converting glutamine to glutamate. PurL transfers the ammonia molecule to FGAR to form FGAM in an ATP-dependent manner. PurS interacts with PurQ and PurL and is thought to assist in the transfer of the ammonia molecule from PurQ to PurL. This chain is Phosphoribosylformylglycinamidine synthase subunit PurL, found in Sulfolobus acidocaldarius (strain ATCC 33909 / DSM 639 / JCM 8929 / NBRC 15157 / NCIMB 11770).